A 958-amino-acid chain; its full sequence is Protein translocase subunit SecA (958 aa).

ATP is bound by residues Q87, 105–109, and D524; that span reads GEGKT. The disordered stretch occupies residues 598–617; it reads RRIDNQLRGRSGRQGDPGRS. 4 residues coordinate Zn(2+): C939, C941, C950, and H951.

It belongs to the SecA family. Monomer and homodimer. Part of the essential Sec protein translocation apparatus which comprises SecA, SecYEG and auxiliary proteins SecDF-YajC and YidC. The cofactor is Zn(2+).

The protein localises to the cell inner membrane. It localises to the cytoplasm. The catalysed reaction is ATP + H2O + cellular proteinSide 1 = ADP + phosphate + cellular proteinSide 2.. Functionally, part of the Sec protein translocase complex. Interacts with the SecYEG preprotein conducting channel. Has a central role in coupling the hydrolysis of ATP to the transfer of proteins into and across the cell membrane, serving both as a receptor for the preprotein-SecB complex and as an ATP-driven molecular motor driving the stepwise translocation of polypeptide chains across the membrane. In Methylobacterium sp. (strain 4-46), this protein is Protein translocase subunit SecA.